A 635-amino-acid chain; its full sequence is Threonine--tRNA ligase (635 aa).

In terms of domain architecture, TGS spans 1-61 (MTVVRLPDGT…ETDSDLVLIT (61 aa)). Residues 242–533 (DHRKLGKQLD…LIEHHAGALP (292 aa)) are catalytic. Zn(2+) is bound by residues C333, H384, and H510.

It belongs to the class-II aminoacyl-tRNA synthetase family. Homodimer. The cofactor is Zn(2+).

It localises to the cytoplasm. The catalysed reaction is tRNA(Thr) + L-threonine + ATP = L-threonyl-tRNA(Thr) + AMP + diphosphate + H(+). Its function is as follows. Catalyzes the attachment of threonine to tRNA(Thr) in a two-step reaction: L-threonine is first activated by ATP to form Thr-AMP and then transferred to the acceptor end of tRNA(Thr). Also edits incorrectly charged L-seryl-tRNA(Thr). The polypeptide is Threonine--tRNA ligase (Nitrosomonas europaea (strain ATCC 19718 / CIP 103999 / KCTC 2705 / NBRC 14298)).